We begin with the raw amino-acid sequence, 320 residues long: Ubiquitin-like domain-containing CTD phosphatase 1 (320 aa).

The 72-residue stretch at 6-77 (VVVIVKWSGK…LKPNFKLMMV (72 aa)) folds into the Ubiquitin-like domain. An FCP1 homology domain is found at 136-296 (PREGKKLLVL…LKLSDYLRKI (161 aa)). Residues Asp-146, Asp-148, and Asp-255 each contribute to the Mg(2+) site.

Mg(2+) is required as a cofactor.

Its subcellular location is the nucleus. The enzyme catalyses O-phospho-L-seryl-[protein] + H2O = L-seryl-[protein] + phosphate. It carries out the reaction O-phospho-L-threonyl-[protein] + H2O = L-threonyl-[protein] + phosphate. Functionally, dephosphorylates 26S nuclear proteasomes, thereby decreasing their proteolytic activity. Recruited to the 19S regulatory particle of the 26S proteasome where it dephosphorylates 19S component Rpt1 which impairs Rpt1 ATPase activity and disrupts 26S proteasome assembly. The sequence is that of Ubiquitin-like domain-containing CTD phosphatase 1 from Drosophila melanogaster (Fruit fly).